The primary structure comprises 115 residues: U3-lycotoxin-Ls1j (115 aa).

The N-terminal stretch at 1 to 20 (MKFVLLFGVFLVTLFSYSSA) is a signal peptide. Residues 21-44 (EMLDDFDQADEDELLSLIEKEEAR) constitute a propeptide that is removed on maturation. Intrachain disulfides connect Cys48/Cys63, Cys55/Cys72, Cys62/Cys87, and Cys74/Cys85.

Belongs to the neurotoxin 19 (CSTX) family. 01 subfamily. In terms of tissue distribution, expressed by the venom gland.

It is found in the secreted. The protein is U3-lycotoxin-Ls1j of Lycosa singoriensis (Wolf spider).